We begin with the raw amino-acid sequence, 651 residues long: Probable potassium transport system protein Kup (651 aa).

Helical transmembrane passes span 41-61 (LVLGALGVVYGDIGTSPIYAF), 82-102 (VVSLIFWALTLVVTVKYVLFV), 130-150 (LILGVGICGAALFFGDAVITP), 163-183 (IVAPNLTPFVVPATVVILVTL), 194-214 (VAIVFGPIMALWFVALGASGL), 235-255 (FLTVSPAVAFVTVGAVFLAMT), 276-296 (WLWIVFPCLLLNYFGQAAFIL), 309-329 (MIPSFALWPMVLLATAATVIA), 366-386 (IYIPRVNLLLGLAVVILVLGF), 395-415 (AYGIAVTGNMLVTTVLLYIVM), 426-446 (ALPIILGFLVIDMLFFSANII), and 450-470 (EGGWASIGIATVLVLIMWTWV).

Belongs to the HAK/KUP transporter (TC 2.A.72) family.

The protein resides in the cell inner membrane. It carries out the reaction K(+)(in) + H(+)(in) = K(+)(out) + H(+)(out). Its function is as follows. Transport of potassium into the cell. Likely operates as a K(+):H(+) symporter. The chain is Probable potassium transport system protein Kup from Brucella canis (strain ATCC 23365 / NCTC 10854 / RM-666).